The following is a 545-amino-acid chain: MAKEILFNIEARDQLKKGVDALANAVKVTLGPKGRNVIIEKKFGAPHITKDGVTVAKEIELTDAYQNTGAQLVKEVASKTGDDAGDGTTTATVLAQAIIAEGLKNVTAGASPMDIKRGIDKAVAKVVDSIKHQAEKVGDNYDKIEQVATVSANNDPVIGKLIADAMRKVSKDGVITIEEAKGTDTTIGVVEGMQFDRGYLSAYFVTNTEKMECEMEKPYILIYDKKISNLKDFLPILEPAVQSGRPLLVIAEDVDSEALTTLVVNRLRSQLKICAVKAPGFGDRRKEMLEDIAVLTGGVVISEEKGLKLEQATIEMLGTADKVTVSKDNTTIVNGAGAKENIKERCDQIKAQIAATKSDYDREKLQERLAKLSGGVAVLYVGAASEVEMKEKKDRVDDALRATRAAIEEGIVAGGGVAYIRAIESLDGLKGENDDETTGIAIIKRAIEEPLRQIVANAGKEGAVVVQKVSEGKGDFGYNARTDVYENMHAAGVVDPAKVTRVALENAASIAGMFLTTECVIVEKKEDKPEMPMGAPGMGGMGGMM.

ATP is bound by residues 29–32 (TLGP), Lys-50, 86–90 (DGTTT), Gly-415, and Asp-495.

This sequence belongs to the chaperonin (HSP60) family. Forms a cylinder of 14 subunits composed of two heptameric rings stacked back-to-back. Interacts with the co-chaperonin GroES.

Its subcellular location is the cytoplasm. It catalyses the reaction ATP + H2O + a folded polypeptide = ADP + phosphate + an unfolded polypeptide.. Functionally, together with its co-chaperonin GroES, plays an essential role in assisting protein folding. The GroEL-GroES system forms a nano-cage that allows encapsulation of the non-native substrate proteins and provides a physical environment optimized to promote and accelerate protein folding. This is Chaperonin GroEL from Bacteroides fragilis (strain ATCC 25285 / DSM 2151 / CCUG 4856 / JCM 11019 / LMG 10263 / NCTC 9343 / Onslow / VPI 2553 / EN-2).